The primary structure comprises 420 residues: Putative transporter AmpG 3 (420 aa).

The next 12 helical transmembrane spans lie at 6 to 26 (YLIG…LIFF), 41 to 61 (IVGS…WSPF), 79 to 99 (GWAL…LKRS), 104 to 124 (LCIT…QDIV), 141 to 161 (IAFT…SVGA), 166 to 186 (IIFG…VGPI), 230 to 250 (LLLI…PMAM), 274 to 294 (LLIM…IGIF), 297 to 317 (VLIG…LATI), 324 to 344 (FIIT…IISI), 359 to 381 (YSIS…GICA), and 386 to 406 (WPVF…IFYI).

The protein belongs to the major facilitator superfamily.

The protein localises to the cell inner membrane. The protein is Putative transporter AmpG 3 (ampG3) of Rickettsia typhi (strain ATCC VR-144 / Wilmington).